The following is a 607-amino-acid chain: Elongation factor 4 (607 aa).

Residues 6 to 188 (SRIRNFSIIA…AIVARIPPPR (183 aa)) enclose the tr-type G domain. Residues 18–23 (DHGKST) and 135–138 (NKID) each bind GTP.

Belongs to the TRAFAC class translation factor GTPase superfamily. Classic translation factor GTPase family. LepA subfamily.

Its subcellular location is the cell inner membrane. The enzyme catalyses GTP + H2O = GDP + phosphate + H(+). In terms of biological role, required for accurate and efficient protein synthesis under certain stress conditions. May act as a fidelity factor of the translation reaction, by catalyzing a one-codon backward translocation of tRNAs on improperly translocated ribosomes. Back-translocation proceeds from a post-translocation (POST) complex to a pre-translocation (PRE) complex, thus giving elongation factor G a second chance to translocate the tRNAs correctly. Binds to ribosomes in a GTP-dependent manner. The sequence is that of Elongation factor 4 from Sphingopyxis alaskensis (strain DSM 13593 / LMG 18877 / RB2256) (Sphingomonas alaskensis).